Reading from the N-terminus, the 597-residue chain is Elongation factor 4 (597 aa).

The tr-type G domain occupies 2 to 184 (KHIRNFSIIA…NIVSAIPAPE (183 aa)). Residues 14–19 (DHGKST) and 131–134 (NKID) each bind GTP.

The protein belongs to the TRAFAC class translation factor GTPase superfamily. Classic translation factor GTPase family. LepA subfamily.

Its subcellular location is the cell inner membrane. The catalysed reaction is GTP + H2O = GDP + phosphate + H(+). In terms of biological role, required for accurate and efficient protein synthesis under certain stress conditions. May act as a fidelity factor of the translation reaction, by catalyzing a one-codon backward translocation of tRNAs on improperly translocated ribosomes. Back-translocation proceeds from a post-translocation (POST) complex to a pre-translocation (PRE) complex, thus giving elongation factor G a second chance to translocate the tRNAs correctly. Binds to ribosomes in a GTP-dependent manner. In Vibrio parahaemolyticus serotype O3:K6 (strain RIMD 2210633), this protein is Elongation factor 4.